The primary structure comprises 284 residues: Phosphate import ATP-binding protein PstB 2 (284 aa).

Residues 1–22 show a composition bias toward polar residues; the sequence is MTLLSTLRGISSPARQQPGTQS. The disordered stretch occupies residues 1-29; sequence MTLLSTLRGISSPARQQPGTQSESRRGGD. One can recognise an ABC transporter domain in the interval 36–278; sequence LAVAGVSHGF…PDDARARKFI (243 aa). Residue 68–75 coordinates ATP; it reads GPSGTGKT.

It belongs to the ABC transporter superfamily. Phosphate importer (TC 3.A.1.7) family. The complex is composed of two ATP-binding proteins (PstB), two transmembrane proteins (PstC and PstA) and a solute-binding protein (PstS).

The protein localises to the cell membrane. It catalyses the reaction phosphate(out) + ATP + H2O = ADP + 2 phosphate(in) + H(+). Part of the ABC transporter complex PstSACB involved in phosphate import. Responsible for energy coupling to the transport system. The chain is Phosphate import ATP-binding protein PstB 2 from Natronomonas pharaonis (strain ATCC 35678 / DSM 2160 / CIP 103997 / JCM 8858 / NBRC 14720 / NCIMB 2260 / Gabara) (Halobacterium pharaonis).